The chain runs to 211 residues: ATP phosphoribosyltransferase (211 aa).

The protein belongs to the ATP phosphoribosyltransferase family. Short subfamily. In terms of assembly, heteromultimer composed of HisG and HisZ subunits.

It localises to the cytoplasm. It catalyses the reaction 1-(5-phospho-beta-D-ribosyl)-ATP + diphosphate = 5-phospho-alpha-D-ribose 1-diphosphate + ATP. It participates in amino-acid biosynthesis; L-histidine biosynthesis; L-histidine from 5-phospho-alpha-D-ribose 1-diphosphate: step 1/9. In terms of biological role, catalyzes the condensation of ATP and 5-phosphoribose 1-diphosphate to form N'-(5'-phosphoribosyl)-ATP (PR-ATP). Has a crucial role in the pathway because the rate of histidine biosynthesis seems to be controlled primarily by regulation of HisG enzymatic activity. In Bacillus cereus (strain B4264), this protein is ATP phosphoribosyltransferase.